The primary structure comprises 549 residues: S-methyl thiourocanate hydratase (549 aa).

Residues Met-49, Gly-173, Met-174, Gly-175, Asp-193, Ser-198, Asn-239, Ala-240, Gln-260, Val-270, and Tyr-318 each coordinate NAD(+).

This sequence belongs to the urocanase family. S-methyl thiourocanate hydratase subfamily. NAD(+) is required as a cofactor.

The enzyme catalyses S-methyl-(E)-thiourocanate + H2O = S-methyl-thiohydantoin-5-propanoate. Its function is as follows. Hydratase involved in the catabolism of S-methyl ergothioneine. Catalyzes the 1,4-addition of H(2)O to S-methyl thiourocanate, leading to the formation of S-methyl-thiohydantoin-5-propanoate, the second step in S-methyl ergothioneine degradation. Cannot use urocanate or thiourocanate as substrate. The polypeptide is S-methyl thiourocanate hydratase (Variovorax sp. (strain JCM 16519 / RA8)).